The chain runs to 368 residues: Quinolinate synthase (368 aa).

The iminosuccinate site is built by His46 and Ser63. A [4Fe-4S] cluster-binding site is contributed by Cys110. Iminosuccinate is bound by residues 141–143 (YVN) and Ser162. Position 230 (Cys230) interacts with [4Fe-4S] cluster. Iminosuccinate is bound by residues 256–258 (HPE) and Thr273. Residue Cys320 participates in [4Fe-4S] cluster binding.

This sequence belongs to the quinolinate synthase family. Type 3 subfamily. Requires [4Fe-4S] cluster as cofactor.

It localises to the cytoplasm. The catalysed reaction is iminosuccinate + dihydroxyacetone phosphate = quinolinate + phosphate + 2 H2O + H(+). The protein operates within cofactor biosynthesis; NAD(+) biosynthesis; quinolinate from iminoaspartate: step 1/1. Functionally, catalyzes the condensation of iminoaspartate with dihydroxyacetone phosphate to form quinolinate. The protein is Quinolinate synthase of Bacillus cytotoxicus (strain DSM 22905 / CIP 110041 / 391-98 / NVH 391-98).